Consider the following 814-residue polypeptide: Acyl-coenzyme A dehydrogenase (814 aa).

Glu497 serves as the catalytic Proton acceptor.

This sequence belongs to the acyl-CoA dehydrogenase family. FAD is required as a cofactor.

The catalysed reaction is a medium-chain 2,3-saturated fatty acyl-CoA + oxidized [electron-transfer flavoprotein] + H(+) = a medium-chain (2E)-enoyl-CoA + reduced [electron-transfer flavoprotein]. It catalyses the reaction a long-chain 2,3-saturated fatty acyl-CoA + oxidized [electron-transfer flavoprotein] + H(+) = a long-chain (2E)-enoyl-CoA + reduced [electron-transfer flavoprotein]. Its pathway is lipid metabolism; fatty acid beta-oxidation. In terms of biological role, catalyzes the dehydrogenation of acyl-coenzymes A (acyl-CoAs) to 2-enoyl-CoAs, the first step of the beta-oxidation cycle of fatty acid degradation. Is required for E.coli to utilize dodecanoate or oleate as the sole carbon and energy source for growth. The polypeptide is Acyl-coenzyme A dehydrogenase (Escherichia coli (strain K12)).